An 895-amino-acid polypeptide reads, in one-letter code: Stonin-2 (895 aa).

Disordered stretches follow at residues 10 to 101, 144 to 204, and 236 to 279; these read THQS…AISN, ASES…METI, and NEVG…PKST. Residues 64–73 are compositionally biased toward basic and acidic residues; it reads SHSEQDDSSE. Composition is skewed to polar residues over residues 145 to 169 and 179 to 193; these read SESSWTTHSEDTSSPSVAPSYTDLQ and GRASGTDSTDNSSSL. Phosphoserine is present on residues S278, S284, and S299. Disordered stretches follow at residues 291–326 and 386–424; these read ISSLNRPPSVTEAPPWRATNPFLNESLQDIQPSPIN and QIDDPDPVGNAALPDDDPTASVEPDAPSPTSALSQPRDG. 2 short sequence motifs (NPF) span residues 310-312 and 326-328; these read NPF. The span at 311-323 shows a compositional bias: polar residues; sequence PFLNESLQDIQPS. The SHD domain occupies 424–557; sequence GWPMMLRIPE…DLPVQSMDLS (134 aa). One can recognise an MHD domain in the interval 565 to 872; the sequence is EEEITVDIRD…AHYSYKVEIE (308 aa). Residue S759 is modified to Phosphoserine.

Belongs to the Stoned B family. As to quaternary structure, interacts with the second C2 domain of synaptotagmins SYT1 and SYT2. Interacts with EPS15, EPS15R and ITSN1. Interacts indirectly with the AP-2 adapter complex. Interacts with TOR1A and COPS4; the interaction controls STON2 protein stability. Phosphorylated in vitro by PKD. Post-translationally, neddylated and ubiquitinated; leading to its degradation and inhibited by TOR1A and COPS4.

It localises to the synapse. It is found in the synaptosome. Its subcellular location is the cytoplasm. The protein localises to the membrane. In terms of biological role, adapter protein involved in endocytic machinery. Involved in the synaptic vesicle recycling. May facilitate clathrin-coated vesicle uncoating. In Rattus norvegicus (Rat), this protein is Stonin-2 (Ston2).